The chain runs to 70 residues: Probable rubredoxin HupI (70 aa).

In terms of domain architecture, Rubredoxin-like spans 15–66; sequence DDRMECGICWHVYDPAEGDPVWQIPPGTPFSNLTEDWRCPNCDALQSKFMRL. Fe cation contacts are provided by cysteine 20, cysteine 23, cysteine 53, and cysteine 56.

Belongs to the rubredoxin family. It depends on Fe(3+) as a cofactor.

Its function is as follows. Could be an electron transport intermediate in hydrogen oxidation. The sequence is that of Probable rubredoxin HupI (hupI) from Rhizobium leguminosarum bv. viciae.